Consider the following 254-residue polypeptide: Receptor expression-enhancing protein 2 (254 aa).

2 helical membrane passes run 1–21 (MVSW…YPAY) and 35–55 (YVKW…ETLT). The residue at position 152 (Ser-152) is a Phosphoserine. The disordered stretch occupies residues 164–254 (ALPLQGPDGR…KKTSAGGDSA (91 aa)). Polar residues predominate over residues 195–204 (SVRSGTNQAD). Residues 205–219 (PRTEISEDDTGDKAP) show a composition bias toward basic and acidic residues.

The protein belongs to the DP1 family. Interacts with odorant receptor proteins.

The protein resides in the membrane. Functionally, required for endoplasmic reticulum (ER) network formation, shaping and remodeling. May enhance the cell surface expression of odorant receptors. This is Receptor expression-enhancing protein 2 (REEP2) from Bos taurus (Bovine).